We begin with the raw amino-acid sequence, 366 residues long: tRNA 2-selenouridine synthase (366 aa).

Residues 12 to 135 enclose the Rhodanese domain; it reads FLNDVPMMDA…MRTFLLDTLH (124 aa). The active-site S-selanylcysteine intermediate is cysteine 95.

This sequence belongs to the SelU family. Monomer.

It catalyses the reaction 5-methylaminomethyl-2-thiouridine(34) in tRNA + selenophosphate + (2E)-geranyl diphosphate + H2O + H(+) = 5-methylaminomethyl-2-selenouridine(34) in tRNA + (2E)-thiogeraniol + phosphate + diphosphate. It carries out the reaction 5-methylaminomethyl-2-thiouridine(34) in tRNA + (2E)-geranyl diphosphate = 5-methylaminomethyl-S-(2E)-geranyl-thiouridine(34) in tRNA + diphosphate. The enzyme catalyses 5-methylaminomethyl-S-(2E)-geranyl-thiouridine(34) in tRNA + selenophosphate + H(+) = 5-methylaminomethyl-2-(Se-phospho)selenouridine(34) in tRNA + (2E)-thiogeraniol. The catalysed reaction is 5-methylaminomethyl-2-(Se-phospho)selenouridine(34) in tRNA + H2O = 5-methylaminomethyl-2-selenouridine(34) in tRNA + phosphate. In terms of biological role, involved in the post-transcriptional modification of the uridine at the wobble position (U34) of tRNA(Lys), tRNA(Glu) and tRNA(Gln). Catalyzes the conversion of 2-thiouridine (S2U-RNA) to 2-selenouridine (Se2U-RNA). Acts in a two-step process involving geranylation of 2-thiouridine (S2U) to S-geranyl-2-thiouridine (geS2U) and subsequent selenation of the latter derivative to 2-selenouridine (Se2U) in the tRNA chain. This is tRNA 2-selenouridine synthase from Pseudomonas savastanoi pv. phaseolicola (strain 1448A / Race 6) (Pseudomonas syringae pv. phaseolicola (strain 1448A / Race 6)).